A 293-amino-acid polypeptide reads, in one-letter code: MPELPEVETVRRGLEPAMAGARIDGFEARRADLRFALQPDLATRLIGQTVKGLGRRAKYLLAELSSGDVLLMHLGMSGSFRVLQGEASGAPGAFHHPRNDDRAHDHVVFRMSNGAVVVFNDPRRFGYMKILAPGEIADEPFLKGLGPEPLGNSFDAAMLASACAGRKTSLKAALLDQRVVAGLGNIYVCEALFGAHLSPKRLAATLATRTGAPTERAERLVEAIRAVLHAAIKAGGSSLRDHRQTSGELGYFQHSFAVYDREGEPCRSKGCDGVVKRFVQNGRSTFWCPKCQK.

Catalysis depends on P2, which acts as the Schiff-base intermediate with DNA. The active-site Proton donor is E3. K58 (proton donor; for beta-elimination activity) is an active-site residue. 3 residues coordinate DNA: H104, R123, and R166. Residues 257 to 293 (AVYDREGEPCRSKGCDGVVKRFVQNGRSTFWCPKCQK) form an FPG-type zinc finger. The active-site Proton donor; for delta-elimination activity is the R283.

This sequence belongs to the FPG family. As to quaternary structure, monomer. Requires Zn(2+) as cofactor.

It catalyses the reaction Hydrolysis of DNA containing ring-opened 7-methylguanine residues, releasing 2,6-diamino-4-hydroxy-5-(N-methyl)formamidopyrimidine.. It carries out the reaction 2'-deoxyribonucleotide-(2'-deoxyribose 5'-phosphate)-2'-deoxyribonucleotide-DNA = a 3'-end 2'-deoxyribonucleotide-(2,3-dehydro-2,3-deoxyribose 5'-phosphate)-DNA + a 5'-end 5'-phospho-2'-deoxyribonucleoside-DNA + H(+). Functionally, involved in base excision repair of DNA damaged by oxidation or by mutagenic agents. Acts as a DNA glycosylase that recognizes and removes damaged bases. Has a preference for oxidized purines, such as 7,8-dihydro-8-oxoguanine (8-oxoG). Has AP (apurinic/apyrimidinic) lyase activity and introduces nicks in the DNA strand. Cleaves the DNA backbone by beta-delta elimination to generate a single-strand break at the site of the removed base with both 3'- and 5'-phosphates. The chain is Formamidopyrimidine-DNA glycosylase from Rhodopseudomonas palustris (strain BisB18).